The following is a 237-amino-acid chain: Phosphoribosylaminoimidazole-succinocarboxamide synthase (237 aa).

This sequence belongs to the SAICAR synthetase family.

It catalyses the reaction 5-amino-1-(5-phospho-D-ribosyl)imidazole-4-carboxylate + L-aspartate + ATP = (2S)-2-[5-amino-1-(5-phospho-beta-D-ribosyl)imidazole-4-carboxamido]succinate + ADP + phosphate + 2 H(+). It participates in purine metabolism; IMP biosynthesis via de novo pathway; 5-amino-1-(5-phospho-D-ribosyl)imidazole-4-carboxamide from 5-amino-1-(5-phospho-D-ribosyl)imidazole-4-carboxylate: step 1/2. The polypeptide is Phosphoribosylaminoimidazole-succinocarboxamide synthase (Serratia proteamaculans (strain 568)).